Consider the following 42-residue polypeptide: Thymosin beta-10 (42 aa).

2 stretches are compositionally biased toward basic and acidic residues: residues 1–25 and 33–42; these read MADK…ETQE and ETIEQEKQAK. Residues 1-42 are disordered; the sequence is MADKPDLGEINSFDKAKLKKTETQEKNTLPTKETIEQEKQAK. Ala2 carries the post-translational modification N-acetylalanine. The residue at position 4 (Lys4) is an N6-acetyllysine. Ser12 is subject to Phosphoserine. An N6-acetyllysine modification is found at Lys15. Residues Thr21, Thr23, and Thr34 each carry the phosphothreonine modification. Lys39 is modified (N6-acetyllysine).

It belongs to the thymosin beta family. In terms of tissue distribution, distributed in numerous types of tissues, including thymus, spleen, lung, liver and muscle.

It is found in the cytoplasm. The protein resides in the cytoskeleton. Its function is as follows. Plays an important role in the organization of the cytoskeleton. Binds to and sequesters actin monomers (G actin) and therefore inhibits actin polymerization. In Bos taurus (Bovine), this protein is Thymosin beta-10 (TMSB10).